The sequence spans 209 residues: Large ribosomal subunit protein uL3 (209 aa).

Gln150 bears the N5-methylglutamine mark.

This sequence belongs to the universal ribosomal protein uL3 family. Part of the 50S ribosomal subunit. Forms a cluster with proteins L14 and L19. Post-translationally, methylated by PrmB.

In terms of biological role, one of the primary rRNA binding proteins, it binds directly near the 3'-end of the 23S rRNA, where it nucleates assembly of the 50S subunit. This chain is Large ribosomal subunit protein uL3, found in Aliivibrio salmonicida (strain LFI1238) (Vibrio salmonicida (strain LFI1238)).